A 122-amino-acid polypeptide reads, in one-letter code: Large ribosomal subunit protein uL14 (122 aa).

Belongs to the universal ribosomal protein uL14 family. Part of the 50S ribosomal subunit. Forms a cluster with proteins L3 and L19. In the 70S ribosome, L14 and L19 interact and together make contacts with the 16S rRNA in bridges B5 and B8.

Functionally, binds to 23S rRNA. Forms part of two intersubunit bridges in the 70S ribosome. In Agrobacterium fabrum (strain C58 / ATCC 33970) (Agrobacterium tumefaciens (strain C58)), this protein is Large ribosomal subunit protein uL14.